A 127-amino-acid chain; its full sequence is Small ribosomal subunit protein uS11 (127 aa).

Belongs to the universal ribosomal protein uS11 family. Part of the 30S ribosomal subunit. Interacts with proteins S7 and S18. Binds to IF-3.

Located on the platform of the 30S subunit, it bridges several disparate RNA helices of the 16S rRNA. Forms part of the Shine-Dalgarno cleft in the 70S ribosome. This chain is Small ribosomal subunit protein uS11, found in Rickettsia africae (strain ESF-5).